The chain runs to 150 residues: D-aminoacyl-tRNA deacylase (150 aa).

The Gly-cisPro motif, important for rejection of L-amino acids motif lies at Gly138 to Pro139.

The protein belongs to the DTD family. In terms of assembly, homodimer.

Its subcellular location is the cytoplasm. The catalysed reaction is glycyl-tRNA(Ala) + H2O = tRNA(Ala) + glycine + H(+). The enzyme catalyses a D-aminoacyl-tRNA + H2O = a tRNA + a D-alpha-amino acid + H(+). An aminoacyl-tRNA editing enzyme that deacylates mischarged D-aminoacyl-tRNAs. Also deacylates mischarged glycyl-tRNA(Ala), protecting cells against glycine mischarging by AlaRS. Acts via tRNA-based rather than protein-based catalysis; rejects L-amino acids rather than detecting D-amino acids in the active site. By recycling D-aminoacyl-tRNA to D-amino acids and free tRNA molecules, this enzyme counteracts the toxicity associated with the formation of D-aminoacyl-tRNA entities in vivo and helps enforce protein L-homochirality. The protein is D-aminoacyl-tRNA deacylase of Chlorobium limicola (strain DSM 245 / NBRC 103803 / 6330).